A 406-amino-acid polypeptide reads, in one-letter code: Eukaryotic initiation factor 4A-I (406 aa).

The interval 1-21 is disordered; sequence MSASQDSRSRDNGPDGMEPEG. Position 2 is an N-acetylserine (serine 2). Serine 4 is modified (phosphoserine). A Q motif motif is present at residues 32-60; the sequence is DSFDDMNLSESLLRGIYAYGFEKPSAIQQ. The Helicase ATP-binding domain maps to 63 to 234; it reads ILPCIKGYDV…KKFMRDPIRI (172 aa). An ATP-binding site is contributed by 76–83; sequence AQSGTGKT. Residue lysine 118 is modified to N6-acetyllysine. Lysine 146 participates in a covalent cross-link: Glycyl lysine isopeptide (Lys-Gly) (interchain with G-Cter in SUMO2). A Phosphothreonine modification is found at threonine 158. Residue lysine 174 is modified to N6-acetyllysine. The DEAD box signature appears at 182–185; the sequence is DEAD. Residue lysine 193 is modified to N6-acetyllysine. A Glycyl lysine isopeptide (Lys-Gly) (interchain with G-Cter in SUMO2) cross-link involves residue lysine 225. Residue lysine 238 is modified to N6-acetyllysine; alternate. A Glycyl lysine isopeptide (Lys-Gly) (interchain with G-Cter in SUMO2); alternate cross-link involves residue lysine 238. In terms of domain architecture, Helicase C-terminal spans 245–406; sequence GIRQFYINVE…EMPLNVADLI (162 aa). Residues lysine 309, lysine 369, and lysine 381 each participate in a glycyl lysine isopeptide (Lys-Gly) (interchain with G-Cter in SUMO2) cross-link.

The protein belongs to the DEAD box helicase family. eIF4A subfamily. EIF4F is a multi-subunit complex, the composition of which varies with external and internal environmental conditions. It is composed of at least EIF4A, EIF4E and EIF4G1/EIF4G3. Interacts with PAIP1, EIF4E and UPF2. Found in a complex with XPO7, EIF4A1, ARHGAP1, VPS26A, VPS29, VPS35 and SFN. May interact with NOM1. Interacts with PDCD4; this interferes with the interaction between EIF4A and EIF4G. Interacts with RBM4. Interacts with DDX3X in an RNA-independent manner. Interacts with PKP1 (via N-terminus); the interaction promotes EIF4A1 recruitment to the cap-dependent translation complex and EIF4A1 ATPase activity.

Its subcellular location is the cytoplasm. The protein localises to the perinuclear region. It is found in the cell membrane. It localises to the stress granule. The enzyme catalyses ATP + H2O = ADP + phosphate + H(+). Functionally, ATP-dependent RNA helicase which is a subunit of the eIF4F complex involved in cap recognition and is required for mRNA binding to ribosome. In the current model of translation initiation, eIF4A unwinds RNA secondary structures in the 5'-UTR of mRNAs which is necessary to allow efficient binding of the small ribosomal subunit, and subsequent scanning for the initiator codon. As a result, promotes cell proliferation and growth. The chain is Eukaryotic initiation factor 4A-I (EIF4A1) from Bos taurus (Bovine).